The chain runs to 406 residues: NADH-ubiquinone oxidoreductase 49 kDa subunit (406 aa).

This sequence belongs to the complex I 49 kDa subunit family. In terms of assembly, complex I is composed of 45 different subunits. Component of the iron-sulfur (IP) fragment of the enzyme.

The protein localises to the mitochondrion inner membrane. The catalysed reaction is a ubiquinone + NADH + 5 H(+)(in) = a ubiquinol + NAD(+) + 4 H(+)(out). Its function is as follows. Core subunit of the mitochondrial membrane respiratory chain NADH dehydrogenase (Complex I) that is believed to belong to the minimal assembly required for catalysis. Complex I functions in the transfer of electrons from NADH to the respiratory chain. The immediate electron acceptor for the enzyme is believed to be ubiquinone. In Dictyostelium discoideum (Social amoeba), this protein is NADH-ubiquinone oxidoreductase 49 kDa subunit (nad7).